We begin with the raw amino-acid sequence, 163 residues long: Ribosome maturation factor RimM (163 aa).

Residues 92–161 (PGEYYHHDLI…AETVTVNAAF (70 aa)) enclose the PRC barrel domain.

This sequence belongs to the RimM family. Binds ribosomal protein uS19.

It is found in the cytoplasm. In terms of biological role, an accessory protein needed during the final step in the assembly of 30S ribosomal subunit, possibly for assembly of the head region. Essential for efficient processing of 16S rRNA. May be needed both before and after RbfA during the maturation of 16S rRNA. It has affinity for free ribosomal 30S subunits but not for 70S ribosomes. The sequence is that of Ribosome maturation factor RimM from Sphingopyxis alaskensis (strain DSM 13593 / LMG 18877 / RB2256) (Sphingomonas alaskensis).